A 193-amino-acid polypeptide reads, in one-letter code: Large ribosomal subunit protein eL19A (193 aa).

Residues 156-179 (QEQQDARRARAKAARQRRAKAVEE) are disordered. A compositionally biased stretch (basic residues) spans 164-174 (ARAKAARQRRA).

Belongs to the eukaryotic ribosomal protein eL19 family. In terms of assembly, component of the large ribosomal subunit (LSU). Mature yeast ribosomes consist of a small (40S) and a large (60S) subunit. The 40S small subunit contains 1 molecule of ribosomal RNA (18S rRNA) and at least 33 different proteins. The large 60S subunit contains 3 rRNA molecules (25S, 5.8S and 5S rRNA) and at least 46 different proteins. eL19 lies in close proximity to the binding site for eukaryotic initiation factor eIF4G.

The protein localises to the cytoplasm. Its function is as follows. Component of the ribosome, a large ribonucleoprotein complex responsible for the synthesis of proteins in the cell. The small ribosomal subunit (SSU) binds messenger RNAs (mRNAs) and translates the encoded message by selecting cognate aminoacyl-transfer RNA (tRNA) molecules. The large subunit (LSU) contains the ribosomal catalytic site termed the peptidyl transferase center (PTC), which catalyzes the formation of peptide bonds, thereby polymerizing the amino acids delivered by tRNAs into a polypeptide chain. The nascent polypeptides leave the ribosome through a tunnel in the LSU and interact with protein factors that function in enzymatic processing, targeting, and the membrane insertion of nascent chains at the exit of the ribosomal tunnel. eL19 may play a role in the last stages of translation initiation, in particular subunit joining and shedding/releasing factors. This Schizosaccharomyces pombe (strain 972 / ATCC 24843) (Fission yeast) protein is Large ribosomal subunit protein eL19A (rpl1901).